The sequence spans 51 residues: Large ribosomal subunit protein eL39 (51 aa).

The protein belongs to the eukaryotic ribosomal protein eL39 family.

The polypeptide is Large ribosomal subunit protein eL39 (rpl39e) (Pyrobaculum aerophilum (strain ATCC 51768 / DSM 7523 / JCM 9630 / CIP 104966 / NBRC 100827 / IM2)).